A 184-amino-acid chain; its full sequence is Gremlin-1 (184 aa).

An N-terminal signal peptide occupies residues 1–24 (MVRTLYAIGAVFLLTGFLLPTAEG). Positions 24–77 (GRKRNRGSQGAIPPPDKDQPNDSEQMQTQQQSGSRHRERGKGTSMPAEEVLESS) are disordered. N-linked (GlcNAc...) asparagine glycosylation occurs at Asn44. Residues 45 to 56 (DSEQMQTQQQSG) show a composition bias toward polar residues. Cystine bridges form between Cys94–Cys144, Cys108–Cys158, Cys118–Cys176, and Cys122–Cys178. The CTCK domain occupies 94 to 184 (CKTQPLKQTI…ECRCISIDLD (91 aa)).

The protein belongs to the DAN family.

The protein localises to the secreted. Functionally, cytokine that may play a role in the development of the medial pallium and during optic nerve and pecten development by modulating BMP signaling. The polypeptide is Gremlin-1 (GREM1) (Gallus gallus (Chicken)).